The following is a 129-amino-acid chain: Small ribosomal subunit protein uS12 (129 aa).

Disordered regions lie at residues 1 to 25 (MPTY…PALE) and 110 to 129 (RKQG…VTKK). Residues 10-20 (FGRKSKTRKTK) show a composition bias toward basic residues.

Belongs to the universal ribosomal protein uS12 family. As to quaternary structure, part of the 30S ribosomal subunit. Contacts proteins S8 and S17. May interact with IF1 in the 30S initiation complex.

Functionally, with S4 and S5 plays an important role in translational accuracy. Interacts with and stabilizes bases of the 16S rRNA that are involved in tRNA selection in the A site and with the mRNA backbone. Located at the interface of the 30S and 50S subunits, it traverses the body of the 30S subunit contacting proteins on the other side and probably holding the rRNA structure together. The combined cluster of proteins S8, S12 and S17 appears to hold together the shoulder and platform of the 30S subunit. The protein is Small ribosomal subunit protein uS12 of Rickettsia conorii (strain ATCC VR-613 / Malish 7).